A 67-amino-acid chain; its full sequence is Conotoxin AbVIM (67 aa).

Positions 1-17 (VLIIAVLFLTACQLIAT) are cleaved as a signal peptide. A propeptide spanning residues 18–40 (ASYARSERKHPDLRLSSRNSKLS) is cleaved from the precursor. 3 disulfides stabilise this stretch: C43–C57, C50–C61, and C56–C66.

Belongs to the conotoxin O1 superfamily. As to expression, expressed by the venom duct.

The protein resides in the secreted. The protein is Conotoxin AbVIM of Conus abbreviatus (Abbreviated cone).